The primary structure comprises 282 residues: Diaminopimelate epimerase (282 aa).

Asn-13, Gln-45, and Asn-64 together coordinate substrate. Cys-73 functions as the Proton donor in the catalytic mechanism. Residues 74-75, Asn-155, Asn-189, and 207-208 contribute to the substrate site; these read GN and ER. Residue Cys-216 is the Proton acceptor of the active site. A substrate-binding site is contributed by 217-218; that stretch reads GS.

It belongs to the diaminopimelate epimerase family. In terms of assembly, homodimer.

It localises to the cytoplasm. It carries out the reaction (2S,6S)-2,6-diaminopimelate = meso-2,6-diaminopimelate. Its pathway is amino-acid biosynthesis; L-lysine biosynthesis via DAP pathway; DL-2,6-diaminopimelate from LL-2,6-diaminopimelate: step 1/1. In terms of biological role, catalyzes the stereoinversion of LL-2,6-diaminopimelate (L,L-DAP) to meso-diaminopimelate (meso-DAP), a precursor of L-lysine and an essential component of the bacterial peptidoglycan. The chain is Diaminopimelate epimerase from Bartonella bacilliformis (strain ATCC 35685 / KC583 / Herrer 020/F12,63).